The primary structure comprises 229 residues: Flavin-dependent thymidylate synthase (229 aa).

In terms of domain architecture, ThyX spans 1–217 (MEFKVLDKGF…PWTFESFLKF (217 aa)). Residues Thr55, 78-80 (RHR), and Glu86 contribute to the FAD site. Residues 75-78 (QWFR), 86-90 (EASLR), and Arg156 each bind dUMP. Residues 78–88 (RHRIGSFNEAS) carry the ThyX motif motif. FAD-binding positions include 172–174 (NAR) and Asn178. Position 183 (Arg183) interacts with dUMP. Arg183 serves as the catalytic Involved in ionization of N3 of dUMP, leading to its activation.

The protein belongs to the thymidylate synthase ThyX family. As to quaternary structure, homotetramer. FAD is required as a cofactor.

It carries out the reaction dUMP + (6R)-5,10-methylene-5,6,7,8-tetrahydrofolate + NADPH + H(+) = dTMP + (6S)-5,6,7,8-tetrahydrofolate + NADP(+). It participates in pyrimidine metabolism; dTTP biosynthesis. Functionally, catalyzes the reductive methylation of 2'-deoxyuridine-5'-monophosphate (dUMP) to 2'-deoxythymidine-5'-monophosphate (dTMP) while utilizing 5,10-methylenetetrahydrofolate (mTHF) as the methyl donor, and NADPH and FADH(2) as the reductant. In Thermosipho melanesiensis (strain DSM 12029 / CIP 104789 / BI429), this protein is Flavin-dependent thymidylate synthase.